The following is a 67-amino-acid chain: MKTNELRDMTDVELNQKLSDLKSELFNLRFQLATGQLENPLRIRNVRKDIARLKTILRENELKQVRA.

The protein belongs to the universal ribosomal protein uL29 family.

The protein is Large ribosomal subunit protein uL29 of Alkaliphilus metalliredigens (strain QYMF).